A 324-amino-acid polypeptide reads, in one-letter code: Aspartate carbamoyltransferase catalytic subunit (324 aa).

Carbamoyl phosphate contacts are provided by Arg71 and Thr72. Lys99 provides a ligand contact to L-aspartate. The carbamoyl phosphate site is built by Arg121, His151, and Gln154. Residues Arg184 and Arg239 each contribute to the L-aspartate site. 2 residues coordinate carbamoyl phosphate: Gly280 and Pro281.

Belongs to the aspartate/ornithine carbamoyltransferase superfamily. ATCase family. Heterododecamer (2C3:3R2) of six catalytic PyrB chains organized as two trimers (C3), and six regulatory PyrI chains organized as three dimers (R2).

The enzyme catalyses carbamoyl phosphate + L-aspartate = N-carbamoyl-L-aspartate + phosphate + H(+). It participates in pyrimidine metabolism; UMP biosynthesis via de novo pathway; (S)-dihydroorotate from bicarbonate: step 2/3. Functionally, catalyzes the condensation of carbamoyl phosphate and aspartate to form carbamoyl aspartate and inorganic phosphate, the committed step in the de novo pyrimidine nucleotide biosynthesis pathway. The polypeptide is Aspartate carbamoyltransferase catalytic subunit (Cupriavidus necator (strain ATCC 17699 / DSM 428 / KCTC 22496 / NCIMB 10442 / H16 / Stanier 337) (Ralstonia eutropha)).